A 285-amino-acid chain; its full sequence is Thrombin-like enzyme TLBm (285 aa).

The Peptidase S1 domain occupies Val1 to Ala273. 6 disulfides stabilise this stretch: Cys7–Cys181, Cys30–Cys46, Cys94–Cys284, Cys156–Cys234, Cys192–Cys209, and Cys224–Cys249. Active-site charge relay system residues include His45 and Asp113. The Charge relay system role is filled by Ser228.

The protein belongs to the peptidase S1 family. Snake venom subfamily. In terms of assembly, monomer. In terms of processing, homologous thrombin-like enzymes are N-glycosylated. This enzyme does not contain the consensus glycosylation sites, suggesting it is not glycosylated. As to expression, expressed by the venom gland.

The protein localises to the secreted. Its activity is regulated as follows. Inhibited by PMSF, disodium-EDTA, S(Dm) and soybean trypsin inhibitor (SBTI). SBTI and S(Dm) (the anti-hemorrhagic protein) acts as a non-competitive inhibitors that decrease the enzymatic activity. In terms of biological role, thrombin-like enzyme that induces the formation of fibrin clot. Cleaves the Aalpha-chain of fibrinogen (FGA) with higher activity than the Bbeta-chain (FGB). Induces platelet aggregation in both platelet-rich plasma and in washed platelet preparations. This aggregation is strongly inhibited by preincubation of the enzyme with PMSF. This is Thrombin-like enzyme TLBm from Bothrops marajoensis (Marajo lancehead).